The following is a 141-amino-acid chain: Large ribosomal subunit protein uL11 (141 aa).

It belongs to the universal ribosomal protein uL11 family. Part of the ribosomal stalk of the 50S ribosomal subunit. Interacts with L10 and the large rRNA to form the base of the stalk. L10 forms an elongated spine to which L12 dimers bind in a sequential fashion forming a multimeric L10(L12)X complex. In terms of processing, one or more lysine residues are methylated.

Its function is as follows. Forms part of the ribosomal stalk which helps the ribosome interact with GTP-bound translation factors. This is Large ribosomal subunit protein uL11 from Streptococcus mutans serotype c (strain ATCC 700610 / UA159).